Reading from the N-terminus, the 101-residue chain is Small ribosomal subunit protein uS17 (101 aa).

This sequence belongs to the universal ribosomal protein uS17 family. In terms of assembly, part of the 30S ribosomal subunit.

One of the primary rRNA binding proteins, it binds specifically to the 5'-end of 16S ribosomal RNA. In Leifsonia xyli subsp. xyli (strain CTCB07), this protein is Small ribosomal subunit protein uS17.